The following is a 243-amino-acid chain: Probable enoyl-CoA hydratase echA6 (243 aa).

Belongs to the enoyl-CoA hydratase/isomerase family.

It carries out the reaction a (3S)-3-hydroxyacyl-CoA = a (2E)-enoyl-CoA + H2O. It catalyses the reaction a 4-saturated-(3S)-3-hydroxyacyl-CoA = a (3E)-enoyl-CoA + H2O. Its function is as follows. Could possibly oxidize fatty acids using specific components. The chain is Probable enoyl-CoA hydratase echA6 (echA6) from Mycobacterium bovis (strain ATCC BAA-935 / AF2122/97).